A 160-amino-acid polypeptide reads, in one-letter code: MRLFYRYQDLAPQLVPLDYTTSPKVKVPYELIGSMPELKDNPFRQRIAQVFSQDGDGHMTLENFLDMFSVMSEMAPRDLKAYYAFKIYDFNNDNYICAWDLEQTVTRLTRGELSAEEVTLVCEKVLDEADGDQDGRLSLEDFQNMILRAPDFLSTFHIRI.

3 EF-hand domains span residues 39–74, 76–111, and 117–152; these read KDNP…MSEM, PRDL…LTRG, and EVTL…APDF. Residues Asp89, Asn91, Asp93, Tyr95, Asp100, Asp130, Asp132, Asp134, Arg136, and Asp141 each coordinate Ca(2+).

Monomer and homodimer. Interacts with ITGA2B (via C-terminus cytoplasmic tail region); the interaction is stabilized/increased in a calcium and magnesium-dependent manner. Interacts with TMC1. As to expression, expressed in heart, liver and inner ear. In the inner ear, expressed in vestibule and basilar membrane cells. Expressed in megakaryocytes and endothelial cells.

In terms of biological role, acts as an auxiliary subunit of the sensory mechanoelectrical transduction (MET) channel in hair cells. Plays a role in regulating hair cell MET channel localization and function. This chain is Calcium and integrin-binding family member 3 (Cib3), found in Mus musculus (Mouse).